Reading from the N-terminus, the 302-residue chain is Phosphoribosylaminoimidazole-succinocarboxamide synthase (302 aa).

This sequence belongs to the SAICAR synthetase family.

The catalysed reaction is 5-amino-1-(5-phospho-D-ribosyl)imidazole-4-carboxylate + L-aspartate + ATP = (2S)-2-[5-amino-1-(5-phospho-beta-D-ribosyl)imidazole-4-carboxamido]succinate + ADP + phosphate + 2 H(+). It functions in the pathway purine metabolism; IMP biosynthesis via de novo pathway; 5-amino-1-(5-phospho-D-ribosyl)imidazole-4-carboxamide from 5-amino-1-(5-phospho-D-ribosyl)imidazole-4-carboxylate: step 1/2. This is Phosphoribosylaminoimidazole-succinocarboxamide synthase from Cupriavidus metallidurans (strain ATCC 43123 / DSM 2839 / NBRC 102507 / CH34) (Ralstonia metallidurans).